Consider the following 57-residue polypeptide: Large ribosomal subunit protein bL32 (57 aa).

The protein belongs to the bacterial ribosomal protein bL32 family.

The protein is Large ribosomal subunit protein bL32 of Mycolicibacterium gilvum (strain PYR-GCK) (Mycobacterium gilvum (strain PYR-GCK)).